The sequence spans 591 residues: Aspartate--tRNA(Asp/Asn) ligase (591 aa).

Glu175 lines the L-aspartate pocket. An aspartate region spans residues 199 to 202; sequence QQFK. Arg221 and His453 together coordinate L-aspartate. 221 to 223 contributes to the ATP binding site; the sequence is RDE. Residue Glu486 participates in ATP binding. Arg493 is a binding site for L-aspartate. Residue 538 to 541 participates in ATP binding; it reads GIDR.

Belongs to the class-II aminoacyl-tRNA synthetase family. Type 1 subfamily. In terms of assembly, homodimer.

The protein resides in the cytoplasm. It carries out the reaction tRNA(Asx) + L-aspartate + ATP = L-aspartyl-tRNA(Asx) + AMP + diphosphate. Its function is as follows. Aspartyl-tRNA synthetase with relaxed tRNA specificity since it is able to aspartylate not only its cognate tRNA(Asp) but also tRNA(Asn). Reaction proceeds in two steps: L-aspartate is first activated by ATP to form Asp-AMP and then transferred to the acceptor end of tRNA(Asp/Asn). The sequence is that of Aspartate--tRNA(Asp/Asn) ligase from Cereibacter sphaeroides (strain ATCC 17029 / ATH 2.4.9) (Rhodobacter sphaeroides).